The chain runs to 407 residues: Leucine-rich repeat-containing protein 42 (407 aa).

5 LRR repeats span residues Val138–Arg159, Ser163–Ile184, Ser191–Thr211, Asn223–Thr243, and Thr247–Phe268. The disordered stretch occupies residues Val360 to Pro389.

Belongs to the LRRC42 family.

This is Leucine-rich repeat-containing protein 42 (lrrc42) from Danio rerio (Zebrafish).